A 789-amino-acid chain; its full sequence is DNA replication helicase (789 aa).

An ATP-binding site is contributed by 64–71 (GTAGAGKS).

This sequence belongs to the herpesviridae helicase family. In terms of assembly, associates with the primase and the primase-associated factor to form the helicase-primase complex.

The protein resides in the host nucleus. Its function is as follows. Component of the helicase/primase complex. Unwinds the DNA at the replication forks and generates single-stranded DNA for both leading and lagging strand synthesis. The primase synthesizes short RNA primers on the lagging strand that the polymerase elongates using dNTPs. Possesses helicase-like motifs and therefore may act as the helicase subunit of the complex. The chain is DNA replication helicase from Equus caballus (Horse).